Reading from the N-terminus, the 150-residue chain is Peptidoglycan-associated lipoprotein (150 aa).

Positions 1-19 are cleaved as a signal peptide; it reads MKKLTKVLLVAGSVAVLAA. Residue cysteine 20 is the site of N-palmitoyl cysteine attachment. Cysteine 20 is lipidated: S-diacylglycerol cysteine. The OmpA-like domain maps to 37–150; the sequence is SVQDLQQRYN…SKNRRAVLAY (114 aa).

Belongs to the Pal lipoprotein family. The Tol-Pal system is composed of five core proteins: the inner membrane proteins TolA, TolQ and TolR, the periplasmic protein TolB and the outer membrane protein Pal. They form a network linking the inner and outer membranes and the peptidoglycan layer.

It is found in the cell outer membrane. Part of the Tol-Pal system, which plays a role in outer membrane invagination during cell division and is important for maintaining outer membrane integrity. In Pasteurella multocida (strain Pm70), this protein is Peptidoglycan-associated lipoprotein.